Here is a 442-residue protein sequence, read N- to C-terminus: MSATRSTFLGSIFRTAKARILISPIARRSLPSPNFTSSRFHTSSSLRQSRIEGSIPRSFLPSIHVRFHSVSASTWFSSRRTSSQGRLASVSMYIQYSTSVPTRSLRRRISNRKKSSAKPILNVSKFHETISKLPPRFTPEELADAITLEEDPFLCFHLFNWASQQPRFTHENCSYHIAIRKLGAAKMYQEMDDIVNQVLSVRHIGNENLYNSIIFYFTKAGKLIRAVNIFRHMVTSKNLECRPTIRTYHILFKALLGRGNNSYINHVYMETVRSLFRQMVDSGIEPDVFALNCLVKGYVLSLHVNDALRIFHQMSVVYDCEPNSFTYDYLIHGLCAQGRTINARELLSEMKGKGFVPNGKSYNSLVNAFALSGEIDDAVKCLWEMIENGRVVDFISYRTLVDESCRKGKYDEATRLLEMLREKQLVDRDSYDKLVNVLHKDL.

The transit peptide at 1 to 67 (MSATRSTFLG…SFLPSIHVRF (67 aa)) directs the protein to the mitochondrion. 6 PPR repeats span residues 206–236 (NENL…MVTS), 244–286 (TIRT…GIEP), 287–322 (DVFA…DCEP), 323–357 (NSFT…GFVP), 358–392 (NGKS…GRVV), and 393–427 (DFIS…QLVD).

It belongs to the PPR family. P subfamily.

It is found in the mitochondrion. The polypeptide is Pentatricopeptide repeat-containing protein At2g27800, mitochondrial (Arabidopsis thaliana (Mouse-ear cress)).